An 86-amino-acid chain; its full sequence is Photosystem I reaction center subunit PsaK 1 (86 aa).

2 helical membrane passes run 14–34 (LSWS…AIAF) and 61–81 (AVLG…LGLA).

This sequence belongs to the PsaG/PsaK family.

The protein resides in the cellular thylakoid membrane. The protein is Photosystem I reaction center subunit PsaK 1 (psaK1) of Synechocystis sp. (strain ATCC 27184 / PCC 6803 / Kazusa).